We begin with the raw amino-acid sequence, 376 residues long: Cytoplasmic tRNA 2-thiolation protein 2 (376 aa).

The protein belongs to the CTU2/NCS2 family.

It is found in the cytoplasm. It participates in tRNA modification; 5-methoxycarbonylmethyl-2-thiouridine-tRNA biosynthesis. Its function is as follows. Plays a central role in 2-thiolation of mcm(5)S(2)U at tRNA wobble positions of tRNA(Lys), tRNA(Glu) and tRNA(Gln). May act by forming a heterodimer with NCS6 that ligates sulfur from thiocarboxylated URM1 onto the uridine of tRNAs at wobble position. Prior mcm(5) tRNA modification by the elongator complex is required for 2-thiolation. May also be involved in protein urmylation. This is Cytoplasmic tRNA 2-thiolation protein 2 from Coccidioides immitis (strain RS) (Valley fever fungus).